Reading from the N-terminus, the 373-residue chain is Glutamine synthetase (373 aa).

Ala2 carries the N-acetylalanine modification. Positions 2-25 are required for glutamine-induced ubiquitination by CRL4(CRBN) and proteasomal degradation; the sequence is ATSASSHLNKGIKQVYMSLPQGEK. An N6-acetyllysine mark is found at Lys11 and Lys14. Residues 24–106 form the GS beta-grasp domain; the sequence is EKVQAMYIWI…VFCEVFKYNR (83 aa). At Tyr104 the chain carries Phosphotyrosine. Positions 113-373 constitute a GS catalytic domain; that stretch reads LRHTCKRIMD…TGDEPFQYKN (261 aa). Glu134 serves as a coordination point for ATP. Mn(2+) is bound by residues Glu134, Glu136, Glu196, and Glu203. 203–208 is an ATP binding site; that stretch reads EFQIGP. 246 to 247 contacts L-glutamate; the sequence is NW. Residue His253 participates in Mn(2+) binding. ATP is bound by residues 255-257, Arg319, and Arg324; that span reads NFS. Arg319 lines the L-glutamate pocket. Position 336-338 (336-338) interacts with ADP; sequence YFE. A Mn(2+)-binding site is contributed by Glu338. Arg340 is an L-glutamate binding site. Ser343 carries the post-translational modification Phosphoserine.

This sequence belongs to the glutamine synthetase family. In terms of assembly, decamer; composed of two pentamers. Interacts with PALMD. Interacts with RHOJ. Interacts with BEST2; this interaction tethers a fraction of GLUL to the membrane, causing a decrease of cytosolic glutamine synthase (GS) activity and inhibits the chloride channel activity of BEST2 by affecting the gating at the aperture in the absence of intracellular glutamate. It depends on Mg(2+) as a cofactor. Mn(2+) is required as a cofactor. In terms of processing, palmitoylated; undergoes autopalmitoylation. Post-translationally, acetylated by EP300/p300; acetylation is stimulated by increased glutamine levels and promotes ubiquitin-mediated proteasomal degradation. Ubiquitinated by ZNRF1. Ubiquitinated by the DCX (DDB1-CUL4-X-box) E3 ubiquitin-protein ligase complex called CRL4(CRBN), leading to proteasomal degradation.

It is found in the cytoplasm. The protein localises to the cytosol. It localises to the microsome. Its subcellular location is the mitochondrion. The protein resides in the cell membrane. The enzyme catalyses L-glutamate + NH4(+) + ATP = L-glutamine + ADP + phosphate + H(+). It catalyses the reaction L-cysteinyl-[protein] + hexadecanoyl-CoA = S-hexadecanoyl-L-cysteinyl-[protein] + CoA. Glutamine synthetase activity is inhibited by methionine sulfoximine (MSO). In terms of biological role, glutamine synthetase that catalyzes the ATP-dependent conversion of glutamate and ammonia to glutamine. Its role depends on tissue localization: in the brain, it regulates the levels of toxic ammonia and converts neurotoxic glutamate to harmless glutamine, whereas in the liver, it is one of the enzymes responsible for the removal of ammonia. Plays a key role in ammonium detoxification during erythropoiesis: the glutamine synthetase activity is required to remove ammonium generated by porphobilinogen deaminase (HMBS) during heme biosynthesis to prevent ammonium accumulation and oxidative stress. Essential for proliferation of fetal skin fibroblasts. Independently of its glutamine synthetase activity, required for endothelial cell migration during vascular development. Involved in angiogenesis by regulating membrane localization and activation of the GTPase RHOJ, possibly by promoting RHOJ palmitoylation. May act as a palmitoyltransferase for RHOJ: able to autopalmitoylate and then transfer the palmitoyl group to RHOJ. Plays a role in ribosomal 40S subunit biogenesis. Through the interaction with BEST2, inhibits BEST2 channel activity by affecting the gating at the aperture in the absence of intracellular L-glutamate, but sensitizes BEST2 to intracellular L-glutamate, which promotes the opening of BEST2 and thus relieves its inhibitory effect on BEST2. The polypeptide is Glutamine synthetase (Canis lupus familiaris (Dog)).